Consider the following 367-residue polypeptide: Germination protease (367 aa).

Positions 1–15 are excised as a propeptide; the sequence is MKEPLDLSKYSIRTD.

It belongs to the peptidase A25 family. In terms of assembly, homotetramer. In terms of processing, autoproteolytically processed. The inactive tetrameric zymogen termed p46 autoprocesses to a smaller form termed p41, which is active only during spore germination.

The enzyme catalyses Endopeptidase action with P4 Glu or Asp, P1 preferably Glu &gt; Asp, P1' hydrophobic and P2' Ala.. Initiates the rapid degradation of small, acid-soluble proteins during spore germination. The protein is Germination protease of Bacillus cereus (strain B4264).